A 96-amino-acid chain; its full sequence is uncharacterized protein (96 aa).

A helical membrane pass occupies residues 13–35; sequence PVVRYVVALLHWLLWRVVVIIAI.

It is found in the membrane. This is an uncharacterized protein from Archaeoglobus fulgidus (strain ATCC 49558 / DSM 4304 / JCM 9628 / NBRC 100126 / VC-16).